Reading from the N-terminus, the 144-residue chain is Large ribosomal subunit protein uL15 (144 aa).

Residues 1-49 (MRLNTLSPAAGSKSAPKRVGRGIGSGLGKTAGRGHKGQKSRSGGGVRVG) form a disordered region. Positions 21 to 31 (RGIGSGLGKTA) are enriched in gly residues.

It belongs to the universal ribosomal protein uL15 family. As to quaternary structure, part of the 50S ribosomal subunit.

In terms of biological role, binds to the 23S rRNA. This chain is Large ribosomal subunit protein uL15, found in Shewanella frigidimarina (strain NCIMB 400).